Consider the following 374-residue polypeptide: Histidinol-phosphate aminotransferase 1 (374 aa).

N6-(pyridoxal phosphate)lysine is present on lysine 232.

The protein belongs to the class-II pyridoxal-phosphate-dependent aminotransferase family. Histidinol-phosphate aminotransferase subfamily. Homodimer. Pyridoxal 5'-phosphate is required as a cofactor.

It carries out the reaction L-histidinol phosphate + 2-oxoglutarate = 3-(imidazol-4-yl)-2-oxopropyl phosphate + L-glutamate. It functions in the pathway amino-acid biosynthesis; L-histidine biosynthesis; L-histidine from 5-phospho-alpha-D-ribose 1-diphosphate: step 7/9. In Ralstonia nicotianae (strain ATCC BAA-1114 / GMI1000) (Ralstonia solanacearum), this protein is Histidinol-phosphate aminotransferase 1 (hisC1).